The following is a 131-amino-acid chain: uncharacterized protein (131 aa).

An N-terminal signal peptide occupies residues 1 to 26; sequence MKKIVAAIVVIGLVFIAFFYLYSRSG.

This is an uncharacterized protein from Bacillus subtilis (strain 168).